The chain runs to 396 residues: UPF0164 protein TP_0858 (396 aa).

A signal peptide spans 1–28; the sequence is MGTMIRHTFTHRCGALLCALALGSSTMA.

Belongs to the UPF0164 family.

This Treponema pallidum (strain Nichols) protein is UPF0164 protein TP_0858.